A 259-amino-acid chain; its full sequence is Dickkopf-related protein 2 (259 aa).

Positions 1–33 (MAALMRVKDSSRCLLLLAAVLMVESSQLGSSRA) are cleaved as a signal peptide. The interval 42–70 (LGGETPAQSANRSAGMNQGLAFGGSKKGK) is disordered. Over residues 47-57 (PAQSANRSAGM) the composition is skewed to polar residues. N52 carries an N-linked (GlcNAc...) asparagine glycan. Residues 78 to 127 (CSSDKECEVGRYCHSPHQGSSACMLCRRKKKRCHRDGMCCPGTRCNNGIC) are DKK-type Cys-1. 5 disulfides stabilise this stretch: C183/C195, C189/C204, C194/C231, C214/C239, and C233/C256. Residues 183 to 256 (CLRSSDCIDG…YSSKARLHVC (74 aa)) are DKK-type Cys-2.

Belongs to the dickkopf family. Interacts with LRP5 and LRP6. Post-translationally, may be proteolytically processed by a furin-like protease.

The protein localises to the secreted. In terms of biological role, antagonizes canonical Wnt signaling by inhibiting LRP5/6 interaction with Wnt and by forming a ternary complex with the transmembrane protein KREMEN that promotes internalization of LRP5/6. DKKs play an important role in vertebrate development, where they locally inhibit Wnt regulated processes such as antero-posterior axial patterning, limb development, somitogenesis and eye formation. In the adult, Dkks are implicated in bone formation and bone disease, cancer and Alzheimer disease. The polypeptide is Dickkopf-related protein 2 (Mus musculus (Mouse)).